The primary structure comprises 686 residues: Glycine--tRNA ligase beta subunit (686 aa).

The protein belongs to the class-II aminoacyl-tRNA synthetase family. Tetramer of two alpha and two beta subunits.

It is found in the cytoplasm. The catalysed reaction is tRNA(Gly) + glycine + ATP = glycyl-tRNA(Gly) + AMP + diphosphate. The polypeptide is Glycine--tRNA ligase beta subunit (Geobacter metallireducens (strain ATCC 53774 / DSM 7210 / GS-15)).